A 1804-amino-acid polypeptide reads, in one-letter code: Collagen alpha-1(XI) chain (1804 aa).

The signal sequence occupies residues 1 to 34 (MEPWSRWKTKRWIWDLTISTLVLTFLFQAREVRG). Residues 35-511 (AAPVDILKAL…SKGPTISAQE (477 aa)) constitute a propeptide, N-terminal propeptide. Intrachain disulfides connect Cys60/Cys242 and Cys181/Cys235. Residues 70–242 (DIAYRVTEEA…DYCDHYSPDC (173 aa)) enclose the Laminin G-like domain. The nonhelical region stretch occupies residues 229 to 417 (KAAYDYCDHY…DFTETSINGH (189 aa)). Asn351 is a glycosylation site (N-linked (GlcNAc...) asparagine). The segment at 418-506 (GAYGEKGQKG…YGGDGSKGPT (89 aa)) is triple-helical region (interrupted). Positions 437 to 506 (LVEGPPGPAG…YGGDGSKGPT (70 aa)) are disordered. A Collagen-like 1 domain is found at 440–488 (GPPGPAGPAGLMGPPGLQGPSGLPGDPGDRGPPGRPGLPGADGLPGPPG). 2 stretches are compositionally biased toward low complexity: residues 447 to 465 (PAGL…LPGD) and 477 to 494 (LPGA…LMLP). Residues 507–509 (ISA) are short nonhelical segment. The tract at residues 510–527 (QEAQAQAILQQARIALRG) is telopeptide. Positions 526 to 1560 (RGPPGPMGLT…KTRRHTESIQ (1035 aa)) are disordered. A triple-helical region region spans residues 528–1540 (PPGPMGLTGR…PGPPGPPGEV (1013 aa)). Collagen-like domains lie at 530 to 584 (GPMG…GADG), 581 to 639 (GADG…EIGP), 607 to 664 (PGDK…PGQP), and 641 to 698 (GLPG…GPQG). Gly residues-rich tracts occupy residues 539 to 548 (GPVGGPGSAG) and 581 to 590 (GADGGRGMPG). Lys610 carries the post-translational modification Allysine. Positions 639–655 (PRGLPGEAGPRGLLGPR) are enriched in low complexity. Positions 697–708 (QGLPGPQGPIGP) are enriched in pro residues. The segment covering 715–726 (QGKPGLAGLPGA) has biased composition (low complexity). A Collagen-like 6 domain is found at 746 to 804 (GPPGPQGPIGYPGPRGVKGADGVRGLKGSKGEKGEDGFPGFKGDMGLKGDRGEVGQVGP). Residues 805-814 (RGEDGPEGPK) are compositionally biased toward basic and acidic residues. 3 stretches are compositionally biased toward low complexity: residues 873–901 (KPGP…PGPK), 916–925 (RGPQGPQGPV), and 969–979 (PQGPTGETGPI). Residues 1040 to 1049 (GLKGGEGPQG) show a composition bias toward gly residues. Residues 1074–1083 (RPGPQGPPGP) show a composition bias toward pro residues. Over residues 1084 to 1108 (AGEKGAPGEKGPQGPAGRDGVQGPV) the composition is skewed to low complexity. A compositionally biased stretch (gly residues) spans 1160–1169 (GIAGGDGEAG). 2 stretches are compositionally biased toward pro residues: residues 1216–1227 (MGPPGPPGPRGP) and 1341–1360 (QPGP…PGKR). Low complexity-rich tracts occupy residues 1383–1392 (AEGPPGKTGP) and 1417–1426 (QGLPGAAGQD). Collagen-like domains follow at residues 1391–1449 (GPVG…SKGE), 1442–1492 (GDPG…PGPA), and 1481–1539 (GAKG…PPGE). Residues 1428–1437 (PPGPLGPPGL) are compositionally biased toward pro residues. Lys1450 carries the post-translational modification Allysine. Over residues 1453–1462 (PGLIGLIGPP) the composition is skewed to low complexity. Residues 1481–1490 (GAKGDGGIPG) are compositionally biased toward gly residues. Residues 1491–1507 (PAGPIGPPGPPGLPGPA) show a composition bias toward pro residues. Residues 1509–1519 (PKGNKGSSGPT) are compositionally biased toward low complexity. Positions 1528–1537 (PGPPGPPGPP) are enriched in pro residues. The nonhelical region (C-terminal) stretch occupies residues 1541-1561 (IQPLPILSPKKTRRHTESIQA). Positions 1562 to 1804 (DAGDNILDYS…FEVGPACFLG (243 aa)) are cleaved as a propeptide — C-terminal propeptide. In terms of domain architecture, Fibrillar collagen NC1 spans 1575–1803 (EEIFGSLNSL…GFEVGPACFL (229 aa)). A disulfide bridge links Cys1605 with Cys1637. Residues Asp1623, Asn1625, Gln1626, Cys1628, and Asp1631 each coordinate Ca(2+). Asn1638 and Asn1707 each carry an N-linked (GlcNAc...) asparagine glycan. 2 disulfides stabilise this stretch: Cys1646/Cys1801 and Cys1712/Cys1755.

Belongs to the fibrillar collagen family. In terms of assembly, trimers composed of three different chains: alpha 1(XI), alpha 2(XI), and alpha 3(XI). Alpha 3(XI) is probably a post-translational modification of alpha 1(II). Prolines at the third position of the tripeptide repeating unit (G-X-Y) are hydroxylated in some or all of the chains. In terms of processing, N-glycosylated.

It is found in the secreted. It localises to the extracellular space. Its subcellular location is the extracellular matrix. May play an important role in fibrillogenesis by controlling lateral growth of collagen II fibrils. This Rattus norvegicus (Rat) protein is Collagen alpha-1(XI) chain (Col11a1).